The chain runs to 176 residues: Large ribosomal subunit protein uL6 (176 aa).

Over residues 151–170 (RPPEPYKGKGVRYADEQVRR) the composition is skewed to basic and acidic residues. The interval 151–176 (RPPEPYKGKGVRYADEQVRRKEAKKK) is disordered.

Belongs to the universal ribosomal protein uL6 family. As to quaternary structure, part of the 50S ribosomal subunit.

In terms of biological role, this protein binds to the 23S rRNA, and is important in its secondary structure. It is located near the subunit interface in the base of the L7/L12 stalk, and near the tRNA binding site of the peptidyltransferase center. The sequence is that of Large ribosomal subunit protein uL6 from Shewanella halifaxensis (strain HAW-EB4).